We begin with the raw amino-acid sequence, 155 residues long: Ribonuclease H (155 aa).

The 142-residue stretch at 5 to 146 folds into the RNase H type-1 domain; it reads DQKPVIIHTD…ADQLARDGLT (142 aa). Mg(2+) is bound by residues Asp-14, Glu-52, Asp-74, and Asp-138. A disordered region spans residues 133 to 155; sequence ENERADQLARDGLTENRMKSRVK.

This sequence belongs to the RNase H family. As to quaternary structure, monomer. Mg(2+) is required as a cofactor.

The protein localises to the cytoplasm. It catalyses the reaction Endonucleolytic cleavage to 5'-phosphomonoester.. Functionally, endonuclease that specifically degrades the RNA of RNA-DNA hybrids. This Rhodopseudomonas palustris (strain ATCC BAA-98 / CGA009) protein is Ribonuclease H.